A 110-amino-acid chain; its full sequence is Large ribosomal subunit protein uL22 (110 aa).

This sequence belongs to the universal ribosomal protein uL22 family. Part of the 50S ribosomal subunit.

In terms of biological role, this protein binds specifically to 23S rRNA; its binding is stimulated by other ribosomal proteins, e.g. L4, L17, and L20. It is important during the early stages of 50S assembly. It makes multiple contacts with different domains of the 23S rRNA in the assembled 50S subunit and ribosome. The globular domain of the protein is located near the polypeptide exit tunnel on the outside of the subunit, while an extended beta-hairpin is found that lines the wall of the exit tunnel in the center of the 70S ribosome. This is Large ribosomal subunit protein uL22 from Haemophilus ducreyi (strain 35000HP / ATCC 700724).